A 233-amino-acid chain; its full sequence is Leucyl/phenylalanyl-tRNA--protein transferase (233 aa).

This sequence belongs to the L/F-transferase family.

Its subcellular location is the cytoplasm. The enzyme catalyses N-terminal L-lysyl-[protein] + L-leucyl-tRNA(Leu) = N-terminal L-leucyl-L-lysyl-[protein] + tRNA(Leu) + H(+). The catalysed reaction is N-terminal L-arginyl-[protein] + L-leucyl-tRNA(Leu) = N-terminal L-leucyl-L-arginyl-[protein] + tRNA(Leu) + H(+). It carries out the reaction L-phenylalanyl-tRNA(Phe) + an N-terminal L-alpha-aminoacyl-[protein] = an N-terminal L-phenylalanyl-L-alpha-aminoacyl-[protein] + tRNA(Phe). Functions in the N-end rule pathway of protein degradation where it conjugates Leu, Phe and, less efficiently, Met from aminoacyl-tRNAs to the N-termini of proteins containing an N-terminal arginine or lysine. The chain is Leucyl/phenylalanyl-tRNA--protein transferase from Klebsiella pneumoniae subsp. pneumoniae (strain ATCC 700721 / MGH 78578).